A 450-amino-acid polypeptide reads, in one-letter code: Cell division cycle 20.5, cofactor of APC complex (450 aa).

WD repeat units lie at residues 129-166 (ADDF…TYKL), 171-210 (EEEG…QVRT), 214-251 (GHES…SIVE), 255-294 (GHTE…SSNP), 304-346 (EHTA…CLNS), 348-389 (ETGS…KMAE), and 392-431 (GHTS…PKTT).

This sequence belongs to the WD repeat CDC20/Fizzy family. In terms of assembly, the APC/C is composed of at least 11 subunits that stay tightly associated throughout the cell cycle. Binds to GIG1 and PYM. Part of the mitotic checkpoint complex (MCC); interacts with MAD2 and BUB1.

The protein resides in the nucleus. Its pathway is protein modification; protein ubiquitination. Functionally, component of the anaphase promoting complex/cyclosome (APC/C), a cell cycle-regulated E3 ubiquitin-protein ligase complex that controls progression through mitosis and the G1 phase of the cell cycle. This is Cell division cycle 20.5, cofactor of APC complex (CDC20-5) from Arabidopsis thaliana (Mouse-ear cress).